The following is a 601-amino-acid chain: Elongation factor 4 (601 aa).

The region spanning 7-189 (KNIRNFSIVA…AIVTRLPPPQ (183 aa)) is the tr-type G domain. Residues 19–24 (DHGKST) and 136–139 (NKID) each bind GTP.

This sequence belongs to the TRAFAC class translation factor GTPase superfamily. Classic translation factor GTPase family. LepA subfamily.

Its subcellular location is the cell inner membrane. The catalysed reaction is GTP + H2O = GDP + phosphate + H(+). In terms of biological role, required for accurate and efficient protein synthesis under certain stress conditions. May act as a fidelity factor of the translation reaction, by catalyzing a one-codon backward translocation of tRNAs on improperly translocated ribosomes. Back-translocation proceeds from a post-translocation (POST) complex to a pre-translocation (PRE) complex, thus giving elongation factor G a second chance to translocate the tRNAs correctly. Binds to ribosomes in a GTP-dependent manner. This is Elongation factor 4 from Methylocella silvestris (strain DSM 15510 / CIP 108128 / LMG 27833 / NCIMB 13906 / BL2).